The primary structure comprises 405 residues: NADH-quinone oxidoreductase subunit D (405 aa).

This sequence belongs to the complex I 49 kDa subunit family. In terms of assembly, NDH-1 is composed of 14 different subunits. Subunits NuoB, C, D, E, F, and G constitute the peripheral sector of the complex.

The protein localises to the cell inner membrane. It carries out the reaction a quinone + NADH + 5 H(+)(in) = a quinol + NAD(+) + 4 H(+)(out). NDH-1 shuttles electrons from NADH, via FMN and iron-sulfur (Fe-S) centers, to quinones in the respiratory chain. The immediate electron acceptor for the enzyme in this species is believed to be ubiquinone. Couples the redox reaction to proton translocation (for every two electrons transferred, four hydrogen ions are translocated across the cytoplasmic membrane), and thus conserves the redox energy in a proton gradient. In Sphingopyxis alaskensis (strain DSM 13593 / LMG 18877 / RB2256) (Sphingomonas alaskensis), this protein is NADH-quinone oxidoreductase subunit D.